Here is a 254-residue protein sequence, read N- to C-terminus: CRISPR-associated endoribonuclease Cas6 1 (254 aa).

Tyr32 serves as the catalytic Proton acceptor. The active-site Proton donor is His47.

This sequence belongs to the CRISPR-associated protein Cas6/Cse3/CasE family.

CRISPR (clustered regularly interspaced short palindromic repeat) is an adaptive immune system that provides protection against mobile genetic elements (viruses, transposable elements and conjugative plasmids). CRISPR clusters contain sequences complementary to antecedent mobile elements and target invading nucleic acids. CRISPR clusters are transcribed and processed into CRISPR RNA (crRNA). This protein processes pre-crRNA into individual crRNA units. This chain is CRISPR-associated endoribonuclease Cas6 1 (cas6a), found in Methanocaldococcus jannaschii (strain ATCC 43067 / DSM 2661 / JAL-1 / JCM 10045 / NBRC 100440) (Methanococcus jannaschii).